The chain runs to 154 residues: Myoglobin (154 aa).

The Globin domain maps to 2–148 (GLSDGEWQLV…FRNDMAAKYK (147 aa)). Residue Ser-4 is modified to Phosphoserine. His-65 lines the nitrite pocket. His-65 contributes to the O2 binding site. Thr-68 carries the phosphothreonine modification. Residue His-94 coordinates heme b.

It belongs to the globin family. As to quaternary structure, monomeric.

The protein localises to the cytoplasm. Its subcellular location is the sarcoplasm. It carries out the reaction Fe(III)-heme b-[protein] + nitric oxide + H2O = Fe(II)-heme b-[protein] + nitrite + 2 H(+). The catalysed reaction is H2O2 + AH2 = A + 2 H2O. Its function is as follows. Monomeric heme protein which primary function is to store oxygen and facilitate its diffusion within muscle tissues. Reversibly binds oxygen through a pentacoordinated heme iron and enables its timely and efficient release as needed during periods of heightened demand. Depending on the oxidative conditions of tissues and cells, and in addition to its ability to bind oxygen, it also has a nitrite reductase activity whereby it regulates the production of bioactive nitric oxide. Under stress conditions, like hypoxia and anoxia, it also protects cells against reactive oxygen species thanks to its pseudoperoxidase activity. This chain is Myoglobin (MB), found in Sapajus apella (Brown-capped capuchin).